The primary structure comprises 404 residues: Propionate kinase (404 aa).

It belongs to the acetokinase family. PduW subfamily.

The protein resides in the cytoplasm. It catalyses the reaction propanoate + ATP = propanoyl phosphate + ADP. It participates in polyol metabolism; 1,2-propanediol degradation. Works with phosphate acetyltransferase (pta) to capture exogenous propionate and regenerate propionyl-CoA during degradation of 1,2-propanediol (1,2-PD). The polypeptide is Propionate kinase (Escherichia fergusonii (strain ATCC 35469 / DSM 13698 / CCUG 18766 / IAM 14443 / JCM 21226 / LMG 7866 / NBRC 102419 / NCTC 12128 / CDC 0568-73)).